Consider the following 179-residue polypeptide: Putative invertase inhibitor (179 aa).

A signal peptide spans 1 to 23; the sequence is MKLSFSLCIFFFNLLLLLQAVIS. 2 disulfides stabilise this stretch: cysteine 31-cysteine 46 and cysteine 102-cysteine 142.

Belongs to the PMEI family. In terms of assembly, monomer. Post-translationally, not glycosylated. In terms of tissue distribution, expressed in pollen (at protein level). Expressed in stem, but not leaves (at protein level). Expressed in pollen.

It localises to the secreted. The protein resides in the cell wall. Its subcellular location is the endoplasmic reticulum. Its function is as follows. Invertase inhibitor. The polypeptide is Putative invertase inhibitor (Platanus acerifolia (London plane tree)).